The following is a 115-amino-acid chain: Large ribosomal subunit protein uL22 (115 aa).

It belongs to the universal ribosomal protein uL22 family. In terms of assembly, part of the 50S ribosomal subunit.

Functionally, this protein binds specifically to 23S rRNA; its binding is stimulated by other ribosomal proteins, e.g. L4, L17, and L20. It is important during the early stages of 50S assembly. It makes multiple contacts with different domains of the 23S rRNA in the assembled 50S subunit and ribosome. Its function is as follows. The globular domain of the protein is located near the polypeptide exit tunnel on the outside of the subunit, while an extended beta-hairpin is found that lines the wall of the exit tunnel in the center of the 70S ribosome. The sequence is that of Large ribosomal subunit protein uL22 from Nitrosospira multiformis (strain ATCC 25196 / NCIMB 11849 / C 71).